The sequence spans 110 residues: Cytochrome c (110 aa).

4 residues coordinate heme c: C21, C24, H25, and M87.

This sequence belongs to the cytochrome c family. In terms of processing, binds 1 heme c group covalently per subunit.

It is found in the mitochondrion intermembrane space. Electron carrier protein. The oxidized form of the cytochrome c heme group can accept an electron from the heme group of the cytochrome c1 subunit of cytochrome reductase. Cytochrome c then transfers this electron to the cytochrome oxidase complex, the final protein carrier in the mitochondrial electron-transport chain. In Kluyveromyces lactis (strain ATCC 8585 / CBS 2359 / DSM 70799 / NBRC 1267 / NRRL Y-1140 / WM37) (Yeast), this protein is Cytochrome c (CYCK).